The following is a 101-amino-acid chain: MLTLAHYLVLGAILFAIAIVGIFLNRRNIIIILMAIELMLLAVNTNFVAFSHYLGDVHGQIFVFFVLTVAAAEAAIGLAILVTLFRKLDTINVEDLDQLKG.

Transmembrane regions (helical) follow at residues 4–24 (LAHY…GIFL), 29–49 (IIII…NFVA), and 61–81 (IFVF…LAIL).

This sequence belongs to the complex I subunit 4L family. As to quaternary structure, NDH-1 is composed of 14 different subunits. Subunits NuoA, H, J, K, L, M, N constitute the membrane sector of the complex.

Its subcellular location is the cell inner membrane. The enzyme catalyses a quinone + NADH + 5 H(+)(in) = a quinol + NAD(+) + 4 H(+)(out). NDH-1 shuttles electrons from NADH, via FMN and iron-sulfur (Fe-S) centers, to quinones in the respiratory chain. The immediate electron acceptor for the enzyme in this species is believed to be ubiquinone. Couples the redox reaction to proton translocation (for every two electrons transferred, four hydrogen ions are translocated across the cytoplasmic membrane), and thus conserves the redox energy in a proton gradient. The polypeptide is NADH-quinone oxidoreductase subunit K (Burkholderia ambifaria (strain MC40-6)).